Reading from the N-terminus, the 360-residue chain is Protein phosphatase 1 regulatory subunit 7 (360 aa).

Residues 1–64 form a disordered region; that stretch reads MAAERGAGQQ…GEEDPEEEHE (64 aa). A2 carries the post-translational modification N-acetylalanine. Phosphoserine is present on residues S12, S24, S27, S44, and S47. The span at 17-34 shows a compositional bias: basic and acidic residues; that stretch reads EVDRRVESEESGDEEGKK. Residues 53 to 63 are compositionally biased toward acidic residues; that stretch reads ERGEEDPEEEH. 11 LRR repeats span residues 77 to 98, 99 to 120, 121 to 142, 143 to 164, 165 to 186, 187 to 208, 209 to 230, 231 to 252, 253 to 274, 275 to 296, and 297 to 318; these read DAED…EVLK, KVKT…EELQ, SLRE…EALT, ELEI…DKLT, RLKK…SNLH, QLQM…DTLT, NLES…DALT, NLTV…QNLV, NLRE…ENNN, KLTM…SHLT, and ELQE…DELK. S322 is modified (phosphoserine). Positions 331–360 constitute an LRRCT domain; sequence NPLQKDPQYRRKVMLALPSVRQIDATFVRF.

This sequence belongs to the SDS22 family. As to quaternary structure, interacts with PPP1CA, PPP1CB and PPP1CC/PPP1G isoform 1. In terms of tissue distribution, widely expressed.

The protein resides in the nucleus. In terms of biological role, regulatory subunit of protein phosphatase 1. The protein is Protein phosphatase 1 regulatory subunit 7 (PPP1R7) of Homo sapiens (Human).